Consider the following 109-residue polypeptide: Spermidine export protein MdtI (109 aa).

Helical transmembrane passes span 6–26 (WVHG…NVLL), 36–56 (CYGI…SQAV), 64–84 (AYAL…WVLF), and 88–108 (LNPK…MIKL).

The protein belongs to the drug/metabolite transporter (DMT) superfamily. Small multidrug resistance (SMR) (TC 2.A.7.1) family. MdtI subfamily. Forms a complex with MdtJ.

It localises to the cell inner membrane. In terms of biological role, catalyzes the excretion of spermidine. The chain is Spermidine export protein MdtI from Salmonella arizonae (strain ATCC BAA-731 / CDC346-86 / RSK2980).